Reading from the N-terminus, the 119-residue chain is UPF0344 protein lp_1373 (119 aa).

4 helical membrane passes run 1–21 (MYLLGHIIGWLWLMLTVAIGL), 32–52 (FLILSRIGYLLIIITGVALAI), 60–80 (WLTLLKVILGLGTIGLIEVAF), and 92–112 (LVTLLVCGTLLTIICGIGLHW).

It belongs to the UPF0344 family.

The protein localises to the cell membrane. This chain is UPF0344 protein lp_1373, found in Lactiplantibacillus plantarum (strain ATCC BAA-793 / NCIMB 8826 / WCFS1) (Lactobacillus plantarum).